The primary structure comprises 266 residues: Histidinol-phosphatase (266 aa).

Glu69, Asp84, Ile86, and Asp87 together coordinate Mg(2+). Glu69 provides a ligand contact to substrate. Substrate contacts are provided by residues 86 to 89 (IDGT), Arg190, and Asp218. Mg(2+) is bound at residue Asp218.

The protein belongs to the inositol monophosphatase superfamily. Mg(2+) serves as cofactor.

The catalysed reaction is L-histidinol phosphate + H2O = L-histidinol + phosphate. Its pathway is amino-acid biosynthesis; L-histidine biosynthesis; L-histidine from 5-phospho-alpha-D-ribose 1-diphosphate: step 8/9. Its function is as follows. Catalyzes the dephosphorylation of histidinol-phosphate to histidinol, the direct precursor of histidine. The sequence is that of Histidinol-phosphatase from Streptomyces coelicolor (strain ATCC BAA-471 / A3(2) / M145).